A 122-amino-acid polypeptide reads, in one-letter code: MRLTSILVLVIAATFHTTGTALTLTKDSKAGIANGDSPASGDFIDANSARLLRRVEKDKVDYEQDEQRSFGALKDAVKKLNPVTAVKKFFKQRARRKKVIQTARNADDNLAWAMRKVYNEAN.

A signal peptide spans 1-21 (MRLTSILVLVIAATFHTTGTA). The RxLR-dEER signature appears at 50-68 (RLLRRVEKDKVDYEQDEQR). The interval 69-86 (SFGALKDAVKKLNPVTAV) is TAP1-binding. The tract at residues 87-98 (KKFFKQRARRKK) is nuclear localization signal (NLS).

It belongs to the RxLR effector family. Interacts with host acetyl transferase TAP1.

It is found in the secreted. The protein localises to the host nucleus. Effector that suppresses plant defense responses during the early stages of pathogen infection. Suppresses cell death induced by effectors and PAMPs in plant hosts. Interacts with host acetyltransferase TAP1 and causes TAP1 relocation into the nucleus where it acetylates histones H2A and H3 during early infection, thereby promoting susceptibility of host plant to P.sojae. This Phytophthora sojae (Soybean stem and root rot agent) protein is RxLR effector protein Avh52.